The primary structure comprises 545 residues: Glutamine-dependent NAD(+) synthetase (545 aa).

The CN hydrolase domain maps to 5–247; it reads LRIAMAQFDF…DQWLVVDYMR (243 aa). The active-site Proton acceptor; for glutaminase activity is the Glu-46. Lys-113 functions as the For glutaminase activity in the catalytic mechanism. Residue Tyr-119 participates in L-glutamine binding. The Nucleophile; for glutaminase activity role is filled by Cys-151. Residues Ser-177 and Lys-183 each contribute to the L-glutamine site. The ligase stretch occupies residues 269–545; sequence VWRAVVRGVQ…RYPISNAYRG (277 aa). Residue 292 to 299 participates in ATP binding; the sequence is GLSGGIDS. Residue Asn-375 participates in deamido-NAD(+) binding. Thr-399 contributes to the ATP binding site. The deamido-NAD(+) site is built by Glu-404 and Lys-516.

In the C-terminal section; belongs to the NAD synthetase family.

The enzyme catalyses deamido-NAD(+) + L-glutamine + ATP + H2O = L-glutamate + AMP + diphosphate + NAD(+) + H(+). It functions in the pathway cofactor biosynthesis; NAD(+) biosynthesis; NAD(+) from deamido-NAD(+) (L-Gln route): step 1/1. Catalyzes the ATP-dependent amidation of deamido-NAD to form NAD. Uses L-glutamine as a nitrogen source. This chain is Glutamine-dependent NAD(+) synthetase, found in Xylella fastidiosa (strain 9a5c).